The primary structure comprises 559 residues: CTP synthase (559 aa).

The amidoligase domain stretch occupies residues 1–270; sequence MTKFVFVTGG…DGLICDKLRL (270 aa). Residue serine 13 coordinates CTP. Serine 13 is a binding site for UTP. ATP is bound by residues 14–19 and aspartate 71; that span reads SLGKGI. Mg(2+) contacts are provided by aspartate 71 and glutamate 144. Residues 151–153, 191–196, and lysine 227 contribute to the CTP site; these read DIE and KTKPTQ. UTP contacts are provided by residues 191-196 and lysine 227; that span reads KTKPTQ. The 254-residue stretch at 295-548 folds into the Glutamine amidotransferase type-1 domain; that stretch reads TIAMVGKYVD…IKAAIDHQKS (254 aa). L-glutamine is bound at residue glycine 357. Cysteine 384 serves as the catalytic Nucleophile; for glutamine hydrolysis. L-glutamine-binding positions include 385–388, glutamate 408, and arginine 474; that span reads LGMQ. Active-site residues include histidine 521 and glutamate 523.

This sequence belongs to the CTP synthase family. As to quaternary structure, homotetramer.

The enzyme catalyses UTP + L-glutamine + ATP + H2O = CTP + L-glutamate + ADP + phosphate + 2 H(+). It carries out the reaction L-glutamine + H2O = L-glutamate + NH4(+). It catalyses the reaction UTP + NH4(+) + ATP = CTP + ADP + phosphate + 2 H(+). It participates in pyrimidine metabolism; CTP biosynthesis via de novo pathway; CTP from UDP: step 2/2. With respect to regulation, allosterically activated by GTP, when glutamine is the substrate; GTP has no effect on the reaction when ammonia is the substrate. The allosteric effector GTP functions by stabilizing the protein conformation that binds the tetrahedral intermediate(s) formed during glutamine hydrolysis. Inhibited by the product CTP, via allosteric rather than competitive inhibition. Catalyzes the ATP-dependent amination of UTP to CTP with either L-glutamine or ammonia as the source of nitrogen. Regulates intracellular CTP levels through interactions with the four ribonucleotide triphosphates. This is CTP synthase from Paracidovorax citrulli (strain AAC00-1) (Acidovorax citrulli).